The sequence spans 573 residues: Myrcene synthase TPS5FN (573 aa).

Arginine 286, aspartate 323, aspartate 327, arginine 464, and aspartate 467 together coordinate (2E)-geranyl diphosphate. Mg(2+)-binding residues include aspartate 323 and aspartate 327. The short motif at 323-327 (DDIFD) is the DDXXD motif element. Mg(2+)-binding residues include aspartate 467, threonine 471, and glutamate 475.

The protein belongs to the terpene synthase family. Tpsb subfamily. Mg(2+) serves as cofactor. Mn(2+) is required as a cofactor. Expressed in glandular trichomes two to four weeks after flowering onset.

It catalyses the reaction (2E)-geranyl diphosphate = beta-myrcene + diphosphate. The enzyme catalyses (2E)-geranyl diphosphate = (1R,5R)-alpha-pinene + diphosphate. The catalysed reaction is (2E)-geranyl diphosphate = sabinene + diphosphate. It carries out the reaction (2E)-geranyl diphosphate = (4S)-limonene + diphosphate. It catalyses the reaction (2E)-geranyl diphosphate = terpinolene + diphosphate. The enzyme catalyses (2E)-geranyl diphosphate = camphene + diphosphate. It participates in secondary metabolite biosynthesis; terpenoid biosynthesis. Involved in monoterpene (C10) olefins biosynthesis, constituants of cannabinoids and terpenoids-rich resins. Catalyzes mainly the conversion of (2E)-geranyl diphosphate to beta-myrcene, and also produces minor products such as alpha-pinene, camphene, sabinene, limonene and terpinolene. The polypeptide is Myrcene synthase TPS5FN (Cannabis sativa (Hemp)).